Consider the following 196-residue polypeptide: Ribosomal RNA small subunit methyltransferase G (196 aa).

S-adenosyl-L-methionine-binding positions include Gly77, Phe82, 127–128 (AE), and Arg140.

Belongs to the methyltransferase superfamily. RNA methyltransferase RsmG family.

The protein localises to the cytoplasm. Functionally, specifically methylates the N7 position of a guanine in 16S rRNA. The polypeptide is Ribosomal RNA small subunit methyltransferase G (Aquifex aeolicus (strain VF5)).